The primary structure comprises 369 residues: MVALLFAGAFSLAFTLFLTPLFIKLFHRLQWGQFIRDDGPQTHHTKRGTATMGGIVIILASVLGYFVGHLLTWDGIRFDPVTPSGLLVVFMMVGLGFVGFLDDYLKTRKQQSLGLGGWQKIAGQVVVATVFAVLAITLRDPVSGLTPASTAISLFRDLPLDFMALGAVIGTGLFIVWICLIVASASNGVNVADGLDGLAAGASIFSIGSYVIIGFWQFNQSCDSVSSYQNEYRCYEVASPLDLAIIAASIVGALIGFLWWNTSPAQIFMGDTGSLGLGGALAALAILSRTELLLVFIGGLFVIVAGSVVLQRIYFKLTHGKRIFLMSPLHHHFELKGWAEVTVVVRFWIIAGLLVAAGVGTFYLEWITQ.

The next 10 membrane-spanning stretches (helical) occupy residues Ala3–Ile23, Gly53–Trp73, Val81–Leu101, Trp118–Leu138, Phe162–Val182, Leu198–Phe218, Pro240–Trp260, Ile267–Leu287, Thr290–Leu310, and Phe347–Ile367.

It belongs to the glycosyltransferase 4 family. MraY subfamily. Mg(2+) is required as a cofactor.

It localises to the cell membrane. The catalysed reaction is UDP-N-acetyl-alpha-D-muramoyl-L-alanyl-gamma-D-glutamyl-meso-2,6-diaminopimeloyl-D-alanyl-D-alanine + di-trans,octa-cis-undecaprenyl phosphate = di-trans,octa-cis-undecaprenyl diphospho-N-acetyl-alpha-D-muramoyl-L-alanyl-D-glutamyl-meso-2,6-diaminopimeloyl-D-alanyl-D-alanine + UMP. It functions in the pathway cell wall biogenesis; peptidoglycan biosynthesis. Functionally, catalyzes the initial step of the lipid cycle reactions in the biosynthesis of the cell wall peptidoglycan: transfers peptidoglycan precursor phospho-MurNAc-pentapeptide from UDP-MurNAc-pentapeptide onto the lipid carrier undecaprenyl phosphate, yielding undecaprenyl-pyrophosphoryl-MurNAc-pentapeptide, known as lipid I. In Clavibacter michiganensis subsp. michiganensis (strain NCPPB 382), this protein is Phospho-N-acetylmuramoyl-pentapeptide-transferase.